We begin with the raw amino-acid sequence, 945 residues long: Protein translocase subunit SecA (945 aa).

ATP contacts are provided by residues Gln-90, 108–112 (GEGKT), and Asp-509. The disordered stretch occupies residues 533 to 568 (VKPEDGHKPPVPLQRRSESSGFGEDKDVTTDNSKPL). Basic and acidic residues predominate over residues 547-561 (RRSESSGFGEDKDVT).

Belongs to the SecA family. As to quaternary structure, monomer and homodimer. Part of the essential Sec protein translocation apparatus which comprises SecA, SecYEG and auxiliary proteins SecDF. Other proteins may also be involved.

Its subcellular location is the cell inner membrane. The protein resides in the cellular thylakoid membrane. It is found in the cytoplasm. The catalysed reaction is ATP + H2O + cellular proteinSide 1 = ADP + phosphate + cellular proteinSide 2.. In terms of biological role, part of the Sec protein translocase complex. Interacts with the SecYEG preprotein conducting channel. Has a central role in coupling the hydrolysis of ATP to the transfer of proteins into and across the cell membrane, serving as an ATP-driven molecular motor driving the stepwise translocation of polypeptide chains across the membrane. Probably participates in protein translocation into and across both the cytoplasmic and thylakoid membranes in cyanobacterial cells. In Prochlorococcus marinus (strain MIT 9211), this protein is Protein translocase subunit SecA.